We begin with the raw amino-acid sequence, 615 residues long: Fibrinogen alpha chain (615 aa).

Residues 1 to 19 (MFSVRDLCLVLSLVGAIKT) form the signal peptide. Residues 71–602 (CRMKGLIDEV…GHTKARPARG (532 aa)) adopt a coiled-coil conformation. Positions 267-427 (FGGDGHARGD…TKQEFHTGKL (161 aa)) are disordered. Over residues 293-302 (GTSSIGNVNP) the composition is skewed to polar residues. A glycan (O-linked (GalNAc...) threonine) is linked at Thr-325. Over residues 373 to 396 (GSAGTWNTGSSGSSSFRPDSSGHG) the composition is skewed to low complexity. A disulfide bond links Cys-455 and Cys-485. The segment at 530 to 615 (EFAALGESGS…SPLGEPSLTP (86 aa)) is disordered. The span at 537-549 (SGSSSSKTSTHSK) shows a compositional bias: low complexity. The segment covering 550-560 (QFVSSSTTVNR) has biased composition (polar residues). The span at 591–601 (QKGHTKARPAR) shows a compositional bias: basic residues.

Heterohexamer; disulfide linked. Contains 2 sets of 3 non-identical chains (alpha, beta and gamma). The 2 heterotrimers are in head to head conformation with the N-termini in a small central domain. Conversion of fibrinogen to fibrin is triggered by thrombin, which cleaves fibrinopeptides A and B from alpha and beta chains, and thus exposes the N-terminal polymerization sites responsible for the formation of the soft clot. The soft clot is converted into the hard clot by factor XIIIA which catalyzes the epsilon-(gamma-glutamyl)lysine cross-linking between gamma chains (stronger) and between alpha chains (weaker) of different monomers. In terms of processing, forms F13A-mediated cross-links between a glutamine and the epsilon-amino group of a lysine residue, forming fibronectin-fibrinogen heteropolymers.

It is found in the secreted. In terms of biological role, cleaved by the protease thrombin to yield monomers which, together with fibrinogen beta (FGB) and fibrinogen gamma (FGG), polymerize to form an insoluble fibrin matrix. Fibrin has a major function in hemostasis as one of the primary components of blood clots. In addition, functions during the early stages of wound repair to stabilize the lesion and guide cell migration during re-epithelialization. Was originally thought to be essential for platelet aggregation, based on in vitro studies using anticoagulated blood. However, subsequent studies have shown that it is not absolutely required for thrombus formation in vivo. Enhances expression of SELP in activated platelets via an ITGB3-dependent pathway. Maternal fibrinogen is essential for successful pregnancy. Fibrin deposition is also associated with infection, where it protects against IFNG-mediated hemorrhage. May also facilitate the immune response via both innate and T-cell mediated pathways. This chain is Fibrinogen alpha chain (FGA), found in Bos taurus (Bovine).